Consider the following 132-residue polypeptide: MVMTDPIADYLTRIRNANMAKHDSVEIPASNIKKSISEILKREGFIRDYEVADDNKQGVIKVFLKYGPNGERVISGLKRISKPGLRNYVSAEDLPKVLNGLGIAIVSTSAGVITDKEARQKNVGGEVVAYVW.

It belongs to the universal ribosomal protein uS8 family. Part of the 30S ribosomal subunit. Contacts proteins S5 and S12.

One of the primary rRNA binding proteins, it binds directly to 16S rRNA central domain where it helps coordinate assembly of the platform of the 30S subunit. This is Small ribosomal subunit protein uS8 from Lactobacillus acidophilus (strain ATCC 700396 / NCK56 / N2 / NCFM).